The sequence spans 316 residues: Protoheme IX farnesyltransferase (316 aa).

A run of 9 helical transmembrane segments spans residues 32–52, 53–73, 93–113, 116–136, 152–172, 180–200, 226–246, 248–268, and 289–309; these read VMSLVVFTAFAGLVLAPGQIN, PVLGLIAILCIAVGAGASGAL, IPAGRIAPSEALAFGLVLSCF, AILGLAVNWLSAGILAFTIFF, NIVIGGAAGAFPPMIGWACVT, TVLFLIIFLWTPAHFWALALF, IVAYAVLTAICAVLPSYLGFA, FAYGLVAAALGAIFIYCSIAV, and IFYLFAIFSALMIDRLAAMLV.

This sequence belongs to the UbiA prenyltransferase family. Protoheme IX farnesyltransferase subfamily.

It is found in the cell inner membrane. It catalyses the reaction heme b + (2E,6E)-farnesyl diphosphate + H2O = Fe(II)-heme o + diphosphate. Its pathway is porphyrin-containing compound metabolism; heme O biosynthesis; heme O from protoheme: step 1/1. Functionally, converts heme B (protoheme IX) to heme O by substitution of the vinyl group on carbon 2 of heme B porphyrin ring with a hydroxyethyl farnesyl side group. The chain is Protoheme IX farnesyltransferase from Rhizobium etli (strain CIAT 652).